Reading from the N-terminus, the 516-residue chain is Maintenance of mitochondrial morphology protein 1 (516 aa).

At 1–43 the chain is on the lumenal side; sequence MAGSTSASLQTPYFPSSTQINPVRVDHTLPLPPAQPSLSFTQG. The helical transmembrane segment at 44–64 threads the bilayer; the sequence is LLVGQLSVVLLIGAFIKFFIF. Over 65–516 the chain is Cytoplasmic; the sequence is GEAPPPPSRG…GSMPDTVTET (452 aa). Disordered regions lie at residues 70-118, 295-349, 420-466, and 485-516; these read PPSR…SSST, TSDQ…SKHG, RTGL…IDRG, and GGHQ…VTET. Composition is skewed to polar residues over residues 74–96, 105–118, and 295–312; these read GLSN…TDSS, STSN…SSST, and TSDQ…TTSE. The SMP-LTD domain occupies 151 to 412; that stretch reads QPESLDWFNV…EPRVQVVGLP (262 aa). The segment covering 449-460 has biased composition (gly residues); sequence GVSGGGGGGGSM.

This sequence belongs to the MMM1 family. Homodimer. Component of the ER-mitochondria encounter structure (ERMES) or MDM complex, composed of MMM1, MDM10, MDM12 and MDM34. An MMM1 homodimer associates with one molecule of MDM12 on each side in a pairwise head-to-tail manner, and the SMP-LTD domains of MMM1 and MDM12 generate a continuous hydrophobic tunnel for phospholipid trafficking.

Its subcellular location is the endoplasmic reticulum membrane. Its function is as follows. Component of the ERMES/MDM complex, which serves as a molecular tether to connect the endoplasmic reticulum (ER) and mitochondria. Components of this complex are involved in the control of mitochondrial shape and protein biogenesis, and function in nonvesicular lipid trafficking between the ER and mitochondria. The MDM12-MMM1 subcomplex functions in the major beta-barrel assembly pathway that is responsible for biogenesis of all outer membrane beta-barrel proteins, and acts in a late step after the SAM complex. The MDM10-MDM12-MMM1 subcomplex further acts in the TOM40-specific pathway after the action of the MDM12-MMM1 complex. Essential for establishing and maintaining the structure of mitochondria and maintenance of mtDNA nucleoids. This chain is Maintenance of mitochondrial morphology protein 1, found in Paracoccidioides brasiliensis (strain Pb18).